Consider the following 412-residue polypeptide: Serine hydroxymethyltransferase (412 aa).

(6S)-5,6,7,8-tetrahydrofolate-binding positions include L117 and 121–123 (GHL). K226 is modified (N6-(pyridoxal phosphate)lysine).

It belongs to the SHMT family. In terms of assembly, homodimer. It depends on pyridoxal 5'-phosphate as a cofactor.

Its subcellular location is the cytoplasm. It catalyses the reaction (6R)-5,10-methylene-5,6,7,8-tetrahydrofolate + glycine + H2O = (6S)-5,6,7,8-tetrahydrofolate + L-serine. It functions in the pathway one-carbon metabolism; tetrahydrofolate interconversion. Its pathway is amino-acid biosynthesis; glycine biosynthesis; glycine from L-serine: step 1/1. Catalyzes the reversible interconversion of serine and glycine with tetrahydrofolate (THF) serving as the one-carbon carrier. This reaction serves as the major source of one-carbon groups required for the biosynthesis of purines, thymidylate, methionine, and other important biomolecules. Also exhibits THF-independent aldolase activity toward beta-hydroxyamino acids, producing glycine and aldehydes, via a retro-aldol mechanism. The protein is Serine hydroxymethyltransferase of Staphylococcus aureus (strain MW2).